The following is a 1237-amino-acid chain: Clustered mitochondria protein homolog (1237 aa).

Positions 291–535 constitute a Clu domain; the sequence is DITRSQENCL…RITPLDVAWS (245 aa). Composition is skewed to basic and acidic residues over residues 575-597 and 845-854; these read RKTA…DKAE and SQIKSQEHSP. Disordered regions lie at residues 575–614 and 845–886; these read RKTA…AVAS and SQIK…VAAS. 3 TPR repeats span residues 957-990, 999-1032, and 1041-1074; these read AKLY…TERT, ILSY…WKII, and ITTM…CEGL. Disordered stretches follow at residues 1152 to 1189 and 1201 to 1237; these read RLRR…KSIG and FIEG…VQTA. Residues 1156–1187 are compositionally biased toward polar residues; sequence TNLSPRMTIGTKPQPQVGQNAPATTNGATSKS.

It belongs to the CLU family. As to quaternary structure, may associate with the eukaryotic translation initiation factor 3 (eIF-3) complex.

The protein localises to the cytoplasm. Functionally, mRNA-binding protein involved in proper cytoplasmic distribution of mitochondria. The chain is Clustered mitochondria protein homolog from Ajellomyces capsulatus (strain NAm1 / WU24) (Darling's disease fungus).